Consider the following 955-residue polypeptide: Glycine dehydrogenase (decarboxylating) (955 aa).

Lysine 702 carries the N6-(pyridoxal phosphate)lysine modification.

It belongs to the GcvP family. In terms of assembly, the glycine cleavage system is composed of four proteins: P, T, L and H. Requires pyridoxal 5'-phosphate as cofactor.

It catalyses the reaction N(6)-[(R)-lipoyl]-L-lysyl-[glycine-cleavage complex H protein] + glycine + H(+) = N(6)-[(R)-S(8)-aminomethyldihydrolipoyl]-L-lysyl-[glycine-cleavage complex H protein] + CO2. Functionally, the glycine cleavage system catalyzes the degradation of glycine. The P protein binds the alpha-amino group of glycine through its pyridoxal phosphate cofactor; CO(2) is released and the remaining methylamine moiety is then transferred to the lipoamide cofactor of the H protein. The polypeptide is Glycine dehydrogenase (decarboxylating) (Stenotrophomonas maltophilia (strain R551-3)).